A 144-amino-acid polypeptide reads, in one-letter code: 3-hydroxyacyl-[acyl-carrier-protein] dehydratase FabZ (144 aa).

Residue H51 is part of the active site.

This sequence belongs to the thioester dehydratase family. FabZ subfamily.

The protein resides in the cytoplasm. It carries out the reaction a (3R)-hydroxyacyl-[ACP] = a (2E)-enoyl-[ACP] + H2O. In terms of biological role, involved in unsaturated fatty acids biosynthesis. Catalyzes the dehydration of short chain beta-hydroxyacyl-ACPs and long chain saturated and unsaturated beta-hydroxyacyl-ACPs. The polypeptide is 3-hydroxyacyl-[acyl-carrier-protein] dehydratase FabZ (fabZ2) (Lactococcus lactis subsp. lactis (strain IL1403) (Streptococcus lactis)).